We begin with the raw amino-acid sequence, 74 residues long: Antimicrobial peptide 1 (74 aa).

The signal sequence occupies residues 1–22 (MEIKYLLTVFLVLLIGSDYCQA). A Lysine amide modification is found at K40. A propeptide spanning residues 46 to 74 (DLDGQIDRSRNFRKRDAELEELLSKLPIY) is cleaved from the precursor.

Expressed by the venom gland.

Its subcellular location is the secreted. It localises to the target cell membrane. In terms of biological role, has antibacterial activity against the Gram-positive bacteria S.aureus (MIC=20 uM), the Gram-negative bacteria E.coli (MIC=150 uM), and the yeast C.albicans (MIC=64 uM). Causes hemolysis on horse erythrocytes. The polypeptide is Antimicrobial peptide 1 (Androctonus amoreuxi (African fattail scorpion)).